The primary structure comprises 574 residues: Putative DNA-directed RNA polymerase subunit alpha-like 1 (574 aa).

The segment at 1–352 (MTNNKNFADW…ELFSLFLQTS (352 aa)) is alpha N-terminal domain (alpha-NTD). Residues 419–574 (PDYDRYNSIT…RERKRGNREF (156 aa)) are alpha C-terminal domain (alpha-CTD). Residues 534–574 (QETLRKEQDEQSSQQQKDQMEKRRWERQNRERERKRGNREF) form a disordered region. Residues 551–574 (DQMEKRRWERQNRERERKRGNREF) are compositionally biased toward basic and acidic residues.

It belongs to the RNA polymerase alpha chain family. As to quaternary structure, in plastids the minimal PEP RNA polymerase catalytic core is composed of four subunits: alpha, beta, beta', and beta''. When a (nuclear-encoded) sigma factor is associated with the core the holoenzyme is formed, which can initiate transcription.

It localises to the plastid. The protein localises to the chloroplast. It carries out the reaction RNA(n) + a ribonucleoside 5'-triphosphate = RNA(n+1) + diphosphate. Its function is as follows. DNA-dependent RNA polymerase catalyzes the transcription of DNA into RNA using the four ribonucleoside triphosphates as substrates. In Pelargonium hortorum (Common geranium), this protein is Putative DNA-directed RNA polymerase subunit alpha-like 1 (rpoAL1-A).